We begin with the raw amino-acid sequence, 451 residues long: Cobalamin reductase PduS (451 aa).

4Fe-4S ferredoxin-type domains are found at residues threonine 255–serine 284 and proline 300–asparagine 330. The [4Fe-4S] cluster site is built by cysteine 264, cysteine 267, cysteine 270, cysteine 274, cysteine 309, cysteine 312, cysteine 315, and cysteine 320.

Belongs to the PduS cobalamin reductase family. As to quaternary structure, monomer, forms a complex with PduO. Interacts with PduT, probably via the N-terminus of PduS. [4Fe-4S] cluster is required as a cofactor. Requires FMN as cofactor.

Its subcellular location is the bacterial microcompartment. It functions in the pathway polyol metabolism; 1,2-propanediol degradation. Its function is as follows. A bifunctional cobalamin reductase that converts cob(III)alamin to cob(II)alamin and then to cob(I)alamin in the bacterial microcompartment (BMC) dedicated to 1,2-propanediol (1,2-PD) degradation. PduS and PduO allow regeneration of the adenosylcobalamin cofactor within the BMC. Cobalamin reduction probably occurs spontaneously in the presence of free reduced flavin nucleotides, this protein may be involved in electron transfer for this reduction. Functionally, expression of a cosmid containing the full 21-gene pdu operon in E.coli allows E.coli to grow on 1,2-propanediol (1,2-PD) with the appearance of BMCs in its cytoplasm. The 1,2-PD-specific bacterial microcompartment (BMC) concentrates low levels of 1,2-PD catabolic enzymes, concentrates volatile reaction intermediates thus enhancing pathway flux and keeps the level of toxic, mutagenic propionaldehyde low. In Citrobacter freundii, this protein is Cobalamin reductase PduS.